The primary structure comprises 184 residues: Photosystem I assembly protein Ycf4 (184 aa).

A run of 2 helical transmembrane segments spans residues 22 to 42 (VCWA…GTSS) and 57 to 77 (IIFF…LFIS).

Belongs to the Ycf4 family.

The protein resides in the plastid. It localises to the chloroplast thylakoid membrane. In terms of biological role, seems to be required for the assembly of the photosystem I complex. This is Photosystem I assembly protein Ycf4 from Morus indica (Mulberry).